We begin with the raw amino-acid sequence, 477 residues long: PEP-dependent dihydroxyacetone kinase, phosphoryl donor subunit DhaM (477 aa).

Residues 1-135 (MIGLIIVSHS…QALQAKQQQL (135 aa)) enclose the PTS EIIA type-4 domain. H9 acts as the Tele-phosphohistidine intermediate in catalysis. The HPr domain occupies 156–243 (ALTTQWVVKN…QLAQHNFGDN (88 aa)). The active-site Pros-phosphohistidine intermediate is the H170. The segment at 269-477 (HAPNTELCIS…IETRSLIVAS (209 aa)) is PTS EI-like, N-terminal part. The Tele-phosphohistidine intermediate role is filled by H435.

Belongs to the PEP-utilizing enzyme family. Homodimer. The dihydroxyacetone kinase complex is composed of a homodimer of DhaM, a homodimer of DhaK and the subunit DhaL.

It carries out the reaction dihydroxyacetone + phosphoenolpyruvate = dihydroxyacetone phosphate + pyruvate. In terms of biological role, component of the dihydroxyacetone kinase complex, which is responsible for the phosphoenolpyruvate (PEP)-dependent phosphorylation of dihydroxyacetone. DhaM serves as the phosphoryl donor. Is phosphorylated by phosphoenolpyruvate in an EI- and HPr-dependent reaction, and a phosphorelay system on histidine residues finally leads to phosphoryl transfer to DhaL and dihydroxyacetone. This Providencia stuartii (strain MRSN 2154) protein is PEP-dependent dihydroxyacetone kinase, phosphoryl donor subunit DhaM.